The primary structure comprises 248 residues: Probable transcriptional regulatory protein M446_6579 (248 aa).

Belongs to the TACO1 family.

The protein localises to the cytoplasm. This chain is Probable transcriptional regulatory protein M446_6579, found in Methylobacterium sp. (strain 4-46).